Here is a 1161-residue protein sequence, read N- to C-terminus: Nardilysin (1161 aa).

The N-terminal stretch at 1–18 (MLRRVAVAAVCVTGRKLR) is a signal peptide. Disordered stretches follow at residues 49–103 (MPGR…IIKS) and 130–218 (VEGK…KKTT). 3 positions are modified to phosphoserine: Ser85, Ser91, and Ser93. Residues 138-209 (TDEEEEEEEE…EENELEELEE (72 aa)) show a composition bias toward acidic residues. His244 is a binding site for Zn(2+). The active-site Proton acceptor is Glu247. Zn(2+)-binding residues include His248 and Glu325.

The protein belongs to the peptidase M16 family. Interacts with BACE1 and NRG1. It depends on Zn(2+) as a cofactor. As to expression, highly expressed in brain of early postnatal mice but expressed at a lower level in the brains of adult mice. Expression is high in cortical neurons, and lower in neurons in the striatum. Very low expression detected in the corpus callosum. Also expressed in the gray matter in spinal cord and dorsal root ganglia.

It localises to the mitochondrion. The protein localises to the cell projection. It is found in the dendrite. It carries out the reaction Hydrolysis of polypeptides, preferably at -Xaa-|-Arg-Lys-, and less commonly at -Arg-|-Arg-Xaa-, in which Xaa is not Arg or Lys.. In terms of biological role, cleaves peptide substrates on the N-terminus of arginine residues in dibasic pairs. Is a critical activator of BACE1- and ADAM17-mediated pro-neuregulin ectodomain shedding, involved in the positive regulation of axonal maturation and myelination. Required for proper functioning of 2-oxoglutarate dehydrogenase (OGDH). The chain is Nardilysin from Mus musculus (Mouse).